The sequence spans 437 residues: Elongation factor 1-gamma (437 aa).

A2 carries the post-translational modification N-acetylalanine. Residues 2 to 87 (AAGTLYTYPE…YVSNEELRGS (86 aa)) enclose the GST N-terminal domain. In terms of domain architecture, GST C-terminal spans 88–216 (TPEAAAQVVQ…VKLCEKMAQF (129 aa)). N6-acetyllysine is present on residues K147 and K212. The span at 221-254 (FAETQPKKDTPRKEKGSREEKQKPQAERKEEKKA) shows a compositional bias: basic and acidic residues. Positions 221–268 (FAETQPKKDTPRKEKGSREEKQKPQAERKEEKKAAAPAPEEEMDECEQ) are disordered. A Glycyl lysine isopeptide (Lys-Gly) (interchain with G-Cter in SUMO1) cross-link involves residue K253. In terms of domain architecture, EF-1-gamma C-terminal spans 276–437 (AKDPFAHLPK…KAFNQGKIFK (162 aa)). A Glycyl lysine isopeptide (Lys-Gly) (interchain with G-Cter in SUMO2) cross-link involves residue K285. N6-acetyllysine is present on K401. Residue K434 is modified to N6-acetyllysine; alternate. Residue K434 is modified to N6-malonyllysine; alternate.

As to quaternary structure, EF-1 is composed of four subunits: alpha, beta, delta, and gamma. As to expression, highly expressed in pancreatic tumor tissue and to a lesser extent in normal kidney, intestine, pancreas, stomach, lung, brain, spleen and liver.

Its function is as follows. Probably plays a role in anchoring the complex to other cellular components. The sequence is that of Elongation factor 1-gamma (EEF1G) from Homo sapiens (Human).